A 495-amino-acid chain; its full sequence is Glutamate--tRNA ligase (495 aa).

A 'HIGH' region motif is present at residues 14-24; sequence PSPTGYLHIGS. The 'KMSKS' region signature appears at 255–259; sequence KLSKR. Position 258 (K258) interacts with ATP.

The protein belongs to the class-I aminoacyl-tRNA synthetase family. Glutamate--tRNA ligase type 1 subfamily. In terms of assembly, monomer.

The protein resides in the cytoplasm. The catalysed reaction is tRNA(Glu) + L-glutamate + ATP = L-glutamyl-tRNA(Glu) + AMP + diphosphate. Its function is as follows. Catalyzes the attachment of glutamate to tRNA(Glu) in a two-step reaction: glutamate is first activated by ATP to form Glu-AMP and then transferred to the acceptor end of tRNA(Glu). The protein is Glutamate--tRNA ligase of Herpetosiphon aurantiacus (strain ATCC 23779 / DSM 785 / 114-95).